Consider the following 143-residue polypeptide: Ribosome maturation factor RimP (143 aa).

It belongs to the RimP family.

It localises to the cytoplasm. Functionally, required for maturation of 30S ribosomal subunits. The protein is Ribosome maturation factor RimP of Borrelia recurrentis (strain A1).